The primary structure comprises 1403 residues: Centrosomal protein of 162 kDa (1403 aa).

Residues 18 to 42 (KELSDDSFENSDKTARQSKKEMKKK) are disordered. Ser157 and Ser160 each carry phosphoserine. Residues 170–231 (QANAELTDDE…EKISVPKQEE (62 aa)) form a disordered region. Positions 208–231 (TKDEEMPSKENSKSEKISVPKQEE) are enriched in basic and acidic residues. Phosphoserine occurs at positions 474 and 475. The interval 476-504 (EEEGAVMGKQVPYKKARSAPPLLKRKPQS) is disordered. Residues 487-502 (PYKKARSAPPLLKRKP) are compositionally biased toward basic residues. Coiled coils occupy residues 617-670 (KRVQ…QDNY), 698-1121 (VTGE…MLSN), 1171-1206 (EVLQ…QFEN), and 1235-1386 (CQNA…LHRQ).

It belongs to the CEP162 family. In terms of assembly, interacts with CEP290. Interacts with CPNE4. Interacts with alpha-tubulin.

The protein localises to the cytoplasm. Its subcellular location is the cytoskeleton. It localises to the microtubule organizing center. It is found in the centrosome. The protein resides in the centriole. The protein localises to the spindle. Its subcellular location is the nucleus. In terms of biological role, required to promote assembly of the transition zone in primary cilia. Acts by specifically recognizing and binding the axonemal microtubule. Localizes to the distal ends of centrioles before ciliogenesis and directly binds to axonemal microtubule, thereby promoting and restricting transition zone formation specifically at the cilia base. Required to mediate CEP290 association with microtubules. The polypeptide is Centrosomal protein of 162 kDa (CEP162) (Homo sapiens (Human)).